The following is a 304-amino-acid chain: Large ribosomal subunit protein uL18 (304 aa).

This sequence belongs to the universal ribosomal protein uL18 family. In terms of assembly, component of a hexameric 5S RNP precursor complex, composed of 5S RNA, RRS1, RPF2, RPL5, RPL11 and SYO1; this complex acts as a precursor for ribosome assembly.

Its subcellular location is the cytoplasm. In terms of biological role, component of the ribosome, a large ribonucleoprotein complex responsible for the synthesis of proteins in the cell. The small ribosomal subunit (SSU) binds messenger RNAs (mRNAs) and translates the encoded message by selecting cognate aminoacyl-transfer RNA (tRNA) molecules. The large subunit (LSU) contains the ribosomal catalytic site termed the peptidyl transferase center (PTC), which catalyzes the formation of peptide bonds, thereby polymerizing the amino acids delivered by tRNAs into a polypeptide chain. The nascent polypeptides leave the ribosome through a tunnel in the LSU and interact with protein factors that function in enzymatic processing, targeting, and the membrane insertion of nascent chains at the exit of the ribosomal tunnel. The protein is Large ribosomal subunit protein uL18 of Chaetomium thermophilum (strain DSM 1495 / CBS 144.50 / IMI 039719) (Thermochaetoides thermophila).